The chain runs to 479 residues: Glutamate--tRNA ligase 2 (479 aa).

A 'HIGH' region motif is present at residues 18–28 (PSPTGFLHIGG). The 'KMSKS' region signature appears at 244 to 248 (KLSKR). Lysine 247 provides a ligand contact to ATP.

The protein belongs to the class-I aminoacyl-tRNA synthetase family. Glutamate--tRNA ligase type 1 subfamily. Monomer.

Its subcellular location is the cytoplasm. It carries out the reaction tRNA(Glu) + L-glutamate + ATP = L-glutamyl-tRNA(Glu) + AMP + diphosphate. Functionally, catalyzes the attachment of glutamate to tRNA(Glu) in a two-step reaction: glutamate is first activated by ATP to form Glu-AMP and then transferred to the acceptor end of tRNA(Glu). The sequence is that of Glutamate--tRNA ligase 2 from Maricaulis maris (strain MCS10) (Caulobacter maris).